The primary structure comprises 908 residues: SH3 and PX domain-containing protein 2B (908 aa).

The region spanning 5-129 (RSIVEVKVLD…QFFETRPEDL (125 aa)) is the PX domain. Y25 is modified (phosphotyrosine). SH3 domains are found at residues 152–211 (MVLE…GQDG) and 221–280 (EEEE…KNSG). S279 and S291 each carry phosphoserine. Disordered regions lie at residues 280–300 (GEPL…ALDL) and 315–366 (ELLN…PPIP). The span at 315–337 (ELLNNQRDGRFEGRLVPDGDVKQ) shows a compositional bias: basic and acidic residues. Over residues 338 to 347 (RSPKMRQRPP) the composition is skewed to basic residues. The SH3 3 domain maps to 368–427 (QVEEEYYTIAEFQTTIPDGISFQAGLKVEVIEKSLSGWWYIQMEDKEGWAPATFIDKYKK). The segment at 455–832 (TENNTGPEAV…LGPRVTGKVG (378 aa)) is disordered. Basic and acidic residues-rich tracts occupy residues 486 to 499 (KDWK…RKAS), 516 to 546 (QEEK…KMEP), 569 to 584 (LARD…DKSK), 595 to 606 (CGHKVLAKEVKK), and 615 to 625 (SKAELSEEKVD). Residues S499 and S528 each carry the phosphoserine modification. Position 661 is a phosphotyrosine (Y661). Over residues 671–684 (KSQEKALLDGESHH) the composition is skewed to basic and acidic residues. Positions 754–764 (VVPPRRPPPPK) are enriched in pro residues. S840 carries the post-translational modification Phosphoserine. The region spanning 847 to 908 (PKDSLYVAVA…IPSNYLRKKP (62 aa)) is the SH3 4 domain.

This sequence belongs to the SH3PXD2 family. Interacts with NOXO1. Interacts (via SH3 domains) with NOXA1; the interaction is direct. Interacts with ADAM15. Interacts with FASLG. Phosphorylated in SRC-transformed cells. As to expression, highly expressed in the stromal-vascular fraction of white adipose tissue with moderate expression in heart, skeletal muscle and the mature adipocyte fraction of white adipose tissue. Also expressed in brain, spleen, kidney and liver. Expressed in white and brown adipose tissues, eye, lung, heart, brain, spleen, stomach, liver and skeletal muscle (at protein level). Not expressed in kidney or bone marrow.

The protein localises to the cytoplasm. It localises to the cell projection. Its subcellular location is the podosome. In terms of biological role, adapter protein involved in invadopodia and podosome formation and extracellular matrix degradation. Binds matrix metalloproteinases (ADAMs), NADPH oxidases (NOXs) and phosphoinositides. Acts as an organizer protein that allows NOX1- or NOX3-dependent reactive oxygen species (ROS) generation and ROS localization. Plays a role in mitotic clonal expansion during the immediate early stage of adipocyte differentiation. The sequence is that of SH3 and PX domain-containing protein 2B (Sh3pxd2b) from Mus musculus (Mouse).